Consider the following 237-residue polypeptide: Ribonuclease PH (237 aa).

Residues Arg86 and 124–126 (GTR) contribute to the phosphate site.

This sequence belongs to the RNase PH family. As to quaternary structure, homohexameric ring arranged as a trimer of dimers.

It catalyses the reaction tRNA(n+1) + phosphate = tRNA(n) + a ribonucleoside 5'-diphosphate. In terms of biological role, phosphorolytic 3'-5' exoribonuclease that plays an important role in tRNA 3'-end maturation. Removes nucleotide residues following the 3'-CCA terminus of tRNAs; can also add nucleotides to the ends of RNA molecules by using nucleoside diphosphates as substrates, but this may not be physiologically important. Probably plays a role in initiation of 16S rRNA degradation (leading to ribosome degradation) during starvation. This is Ribonuclease PH from Alteromonas mediterranea (strain DSM 17117 / CIP 110805 / LMG 28347 / Deep ecotype).